A 1342-amino-acid chain; its full sequence is DNA-directed RNA polymerase subunit beta (1342 aa).

N6-acetyllysine occurs at positions 1022 and 1200.

Belongs to the RNA polymerase beta chain family. In terms of assembly, the RNAP catalytic core consists of 2 alpha, 1 beta, 1 beta' and 1 omega subunit. When a sigma factor is associated with the core the holoenzyme is formed, which can initiate transcription.

The catalysed reaction is RNA(n) + a ribonucleoside 5'-triphosphate = RNA(n+1) + diphosphate. In terms of biological role, DNA-dependent RNA polymerase catalyzes the transcription of DNA into RNA using the four ribonucleoside triphosphates as substrates. The sequence is that of DNA-directed RNA polymerase subunit beta from Shigella dysenteriae serotype 1 (strain Sd197).